Consider the following 119-residue polypeptide: Probable non-functional T cell receptor gamma variable 10 (119 aa).

The first 19 residues, 1 to 19 (MSLLEAFAFSSWALGLGLS), serve as a signal peptide directing secretion. The 96-residue stretch at 24–119 (FQLSISTEVK…MAVYYCAAWD (96 aa)) folds into the Ig-like domain. An intrachain disulfide couples C40 to C115.

Gamma-delta TR is a heterodimer composed of a gamma and delta chain; disulfide-linked. The gamma-delta TR is associated with the transmembrane signaling CD3 coreceptor proteins following the stoichiometry: a single gamma-delta TR heterodimer associates with one CD3D-CD3E heterodimer, one CD3G-CD3E heterodimer and one CD247 homodimer forming a stable octameric structure. Upon activation, gamma-delta TR complex associates with FCER1G to initiate intracellular signaling.

Its subcellular location is the cell membrane. Its function is as follows. Probable non-functional open reading frame (ORF) of V region of the variable domain of T cell receptor (TR) gamma chain. Non-functional ORF generally cannot participate in the synthesis of a productive T cell receptor (TR) chain due to altered V-(D)-J or switch recombination and/or splicing site (at mRNA level) and/or conserved amino acid change (protein level). Gamma-delta TRs recognize a variety of self and foreign non-peptide antigens frequently expressed at the epithelial boundaries between the host and external environment, including endogenous lipids presented by MH-like protein CD1D and phosphoantigens presented by butyrophilin-like molecule BTN3A1. Upon antigen recognition induces rapid, innate-like immune responses involved in pathogen clearance and tissue repair. Binding of gamma-delta TR complex to antigen triggers phosphorylation of immunoreceptor tyrosine-based activation motifs (ITAMs) in the CD3 chains by the LCK and FYN kinases, allowing the recruitment, phosphorylation, and activation of ZAP70 that facilitates phosphorylation of the scaffolding proteins LCP2 and LAT. This lead to the formation of a supramolecular signalosome that recruits the phospholipase PLCG1, resulting in calcium mobilization and ERK activation, ultimately leading to T cell expansion and differentiation into effector cells. Gamma-delta TRs are produced through somatic rearrangement of a limited repertoire of variable (V), diversity (D), and joining (J) genes. The potential diversity of gamma-delta TRs is conferred by the unique ability to rearrange (D) genes in tandem and to utilize all three reading frames. The combinatorial diversity is considerably increased by the sequence exonuclease trimming and random nucleotide (N) region additions which occur during the V-(D)-J rearrangements. The sequence is that of Probable non-functional T cell receptor gamma variable 10 from Homo sapiens (Human).